Here is a 520-residue protein sequence, read N- to C-terminus: Probable E3 ubiquitin-protein ligase rbrA (520 aa).

Positions 1 to 42 (MTDDEMYEDYDVDDDSAEESGNESLDDTEYDDAATQEFDFDE) are enriched in acidic residues. The interval 1-51 (MTDDEMYEDYDVDDDSAEESGNESLDDTEYDDAATQEFDFDENQPQRSLGK) is disordered. A TRIAD supradomain region spans residues 135–354 (GNVSCLICLE…GGYYNCNKYD (220 aa)). Positions 139, 142, 156, 158, 161, 164, 184, 189, 228, 233, 250, 252, 257, 260, 268, 273, 300, and 303 each coordinate Zn(2+). The segment at 139–189 (CLICLEDYPPTQTFALICNHRYCLPCYKNYLEIKVSEGPECIYTPCPAPKC) adopts an RING-type 1 zinc-finger fold. Residues 208 to 273 (ERFNNFILKS…EIGDHMPCPC (66 aa)) form an IBR-type zinc finger. Residues 300 to 333 (CPECRSPIEKNGGCMHMTCRKNAGGCGFEFCWLC) form an RING-type 2; atypical zinc finger. The active site involves Cys313. Positions 318, 325, 330, 333, 340, and 350 each coordinate Zn(2+).

This sequence belongs to the RBR family.

The catalysed reaction is [E2 ubiquitin-conjugating enzyme]-S-ubiquitinyl-L-cysteine + [acceptor protein]-L-lysine = [E2 ubiquitin-conjugating enzyme]-L-cysteine + [acceptor protein]-N(6)-ubiquitinyl-L-lysine.. The protein operates within protein modification; protein ubiquitination. Functionally, might act as an E3 ubiquitin-protein ligase. Appears to be required for normal cell-type proportioning and cell sorting during multicellular development. In addition to being necessary for a normal percentage of prestalk cells and the organization of the slug, rbrA is also necessary for spore cell viability. This is Probable E3 ubiquitin-protein ligase rbrA (rbrA) from Dictyostelium discoideum (Social amoeba).